The sequence spans 266 residues: Oxygen-evolving enhancer protein 2-3, chloroplastic (266 aa).

The N-terminal 80 residues, 1–80 (MASTQCFLHH…VGSKVSPADA (80 aa)), are a transit peptide targeting the chloroplast.

This sequence belongs to the PsbP family.

It is found in the plastid. Its subcellular location is the chloroplast thylakoid membrane. Its function is as follows. May be involved in the regulation of photosystem II. This Nicotiana tabacum (Common tobacco) protein is Oxygen-evolving enhancer protein 2-3, chloroplastic (PSBP3).